Consider the following 606-residue polypeptide: Isocitrate dehydrogenase kinase/phosphatase (606 aa).

ATP contacts are provided by residues 354–360 and lysine 375; that span reads APGFKGT. The active site involves aspartate 414.

This sequence belongs to the AceK family.

It localises to the cytoplasm. The catalysed reaction is L-seryl-[isocitrate dehydrogenase] + ATP = O-phospho-L-seryl-[isocitrate dehydrogenase] + ADP + H(+). Bifunctional enzyme which can phosphorylate or dephosphorylate isocitrate dehydrogenase (IDH) on a specific serine residue. This is a regulatory mechanism which enables bacteria to bypass the Krebs cycle via the glyoxylate shunt in response to the source of carbon. When bacteria are grown on glucose, IDH is fully active and unphosphorylated, but when grown on acetate or ethanol, the activity of IDH declines drastically concomitant with its phosphorylation. The chain is Isocitrate dehydrogenase kinase/phosphatase from Rhodopseudomonas palustris (strain BisB5).